The chain runs to 202 residues: Small ribosomal subunit protein uS4c (202 aa).

The S4 RNA-binding domain maps to 90-153 (MRLDNIIFRL…KSQAIISKNL (64 aa)).

It belongs to the universal ribosomal protein uS4 family. Part of the 30S ribosomal subunit. Contacts protein S5. The interaction surface between S4 and S5 is involved in control of translational fidelity.

Its subcellular location is the plastid. The protein localises to the chloroplast. In terms of biological role, one of the primary rRNA binding proteins, it binds directly to 16S rRNA where it nucleates assembly of the body of the 30S subunit. Functionally, with S5 and S12 plays an important role in translational accuracy. This Rosulabryum capillare (Capillary thread-moss) protein is Small ribosomal subunit protein uS4c (rps4).